Here is a 716-residue protein sequence, read N- to C-terminus: MHKDEIQNLTALEAASELEWLAKEITRHDVLYNRNDQPEISDAEYDALRRRNAEIEALFPELIRPDSPSHKIGAPISEKFEKSVHSQPMLSLDNAFSSEDVSEFMERVRRFLRLPETQMLEITAEPKIDGLSLSLRYEQGRLVCAATRGDGYVGENVTANARTISDIPQVLQGKFPDIIEVRGEVYMRRADFQALNVNQQEKGKLAFANPRNAAAGSLRQLDSRITASRKLQFFAYACGEVSEIFAESQMGMMEKLKEYGFVINPLIKKIKSLEELISYYHDIEERRHALSYDIDGIVYKVNDLMLQMRLGFVSRSPRWAIAHKFPAEKAMTVLEGIDIQVGRTGALTPVARLAPITVGGVVITNASLHNEDYIKGIGSKGEPIREGNDIRVGDTVIVQRAGDVIPQIIDIVAEKRSKDASAFVFPYLCPACGSYAVREIGEAVRRCTGGLICPAQAIERIRHFVSRNAFDIEGLGKKQVEFFFQIQDETLCIHTPADIFTLQRRQEKSLVHLENMEGFGTVSVRKLYDAINARRKIPLSRFLFALGIRYVGEVNARRLARAYQNYTAFETAAMAATMPDDKVGKEGNEAWMELTNIEGIGPQVGEAIIDFYKEVHNREVLSGLLCEVTPLDEESVMTASSPIAGKIIVFTGTLTRMSRDEAKALAERLGAKTSGSLSKKTNLLVAGVGGGSKLTKAQELGVEVIDEEAWLQLIEG.

NAD(+)-binding positions include Asp-42–Asp-46, Ser-91–Leu-92, and Glu-125. The N6-AMP-lysine intermediate role is filled by Lys-127. NAD(+) is bound by residues Arg-148, Glu-184, Lys-300, and Lys-324. Zn(2+)-binding residues include Cys-429, Cys-432, Cys-447, and Cys-453. The BRCT domain maps to Thr-638–Gly-716.

It belongs to the NAD-dependent DNA ligase family. LigA subfamily. Requires Mg(2+) as cofactor. It depends on Mn(2+) as a cofactor.

The catalysed reaction is NAD(+) + (deoxyribonucleotide)n-3'-hydroxyl + 5'-phospho-(deoxyribonucleotide)m = (deoxyribonucleotide)n+m + AMP + beta-nicotinamide D-nucleotide.. Functionally, DNA ligase that catalyzes the formation of phosphodiester linkages between 5'-phosphoryl and 3'-hydroxyl groups in double-stranded DNA using NAD as a coenzyme and as the energy source for the reaction. It is essential for DNA replication and repair of damaged DNA. The polypeptide is DNA ligase (Bartonella henselae (strain ATCC 49882 / DSM 28221 / CCUG 30454 / Houston 1) (Rochalimaea henselae)).